The sequence spans 94 residues: ATP-dependent Clp protease adapter protein ClpS (94 aa).

The protein belongs to the ClpS family. Binds to the N-terminal domain of the chaperone ClpA.

Involved in the modulation of the specificity of the ClpAP-mediated ATP-dependent protein degradation. This chain is ATP-dependent Clp protease adapter protein ClpS, found in Thermosynechococcus vestitus (strain NIES-2133 / IAM M-273 / BP-1).